Reading from the N-terminus, the 1567-residue chain is ABC multidrug transporter MDR1 (1567 aa).

Over residues 1 to 11 (MASQPPQPPSG) the composition is skewed to pro residues. Residues 1–37 (MASQPPQPPSGQPDTQYEEYQSEVITETTNRPTPAAD) form a disordered region. Over residues 22–32 (SEVITETTNRP) the composition is skewed to polar residues. N-linked (GlcNAc...) asparagine glycans are attached at residues Asn-149, Asn-157, and Asn-356. One can recognise an ABC transporter 1 domain in the interval 167–432 (VQYQDTFLSP…FEEMGWYCPP (266 aa)). Transmembrane regions (helical) follow at residues 543 to 563 (STIATNISQIMMALIIGSLFF), 571 to 591 (GFFAKGSVIFFAILLNGLMSI), 636 to 656 (IPIKFLLALVFNIIIYFLGGL), 661 to 681 (AKFFIFFLFTFITILTMSAIF), 691 to 711 (IPQALALAGVMILALVIYTGF), and 798 to 818 (LGILLGFLAFFYFVYLMVSEL). N-linked (GlcNAc...) asparagine glycans are attached at residues Asn-819, Asn-895, and Asn-912. One can recognise an ABC transporter 2 domain in the interval 891–1134 (FTWRNVTYDI…LLNYFETHGA (244 aa)). 927–934 (GVSGAGKT) contributes to the ATP binding site. The tract at residues 1172–1202 (ESRHVQQELDRIQSETSKRNEGHGQSAEKEP) is disordered. A helical transmembrane segment spans residues 1231–1251 (IWGKLLLGLASALFIGFSFFL). Asn-1253 carries N-linked (GlcNAc...) asparagine glycosylation. 5 helical membrane-spanning segments follow: residues 1257-1277 (AGLQNSLFSIFMLTTIFSSLV), 1305-1325 (VFLLANIIVEIPYQILLGIIA), 1345-1365 (ILLLYCVQFFIFASTFAQMII), 1372-1392 (ETAGGIATTMFGLMVTFNGVL), and 1498-1518 (GIGWAYIVFNIFATVALYYLI).

Belongs to the ABC transporter superfamily. ABCG family. PDR (TC 3.A.1.205) subfamily.

The protein localises to the cell membrane. It carries out the reaction voriconazole(in) + ATP + H2O = voriconazole(out) + ADP + phosphate + H(+). The enzyme catalyses fluconazole(in) + ATP + H2O = fluconazole(out) + ADP + phosphate + H(+). It catalyses the reaction (R)-miconazole(in) + ATP + H2O = (R)-miconazole(out) + ADP + phosphate + H(+). The catalysed reaction is (S)-miconazole(in) + ATP + H2O = (S)-miconazole(out) + ADP + phosphate + H(+). Pleiotropic ABC efflux transporter that may be involved in the modulation susceptibility to a wide range of unrelated cytotoxic compounds, including ethidium bromide, ketoconazole, cycloheximide, fluconazole, griseofulvin, imazalil and itraconazole. This Trichophyton interdigitale (strain MR816) protein is ABC multidrug transporter MDR1.